Consider the following 640-residue polypeptide: Acid beta-fructofuranosidase 2, vacuolar (640 aa).

A disordered region spans residues 1-22 (MDTNTTSYTPLPGDPFLSGPPE). Residues 1-29 (MDTNTTSYTPLPGDPFLSGPPETPRRPLK) are Cytoplasmic-facing. A propeptide spans 1–78 (MDTNTTSYTP…HPQSTTNTML (78 aa)) (removed in mature form). A helical membrane pass occupies residues 30–49 (GFAVIFASVIFLMSLVALII). The Lumenal portion of the chain corresponds to 50 to 616 (HQGPQQPPDV…FSPDAASHSS (567 aa)). Substrate-binding positions include 93–96 (WMND), Gln-112, Trp-120, 155–156 (WT), 219–220 (RD), Glu-274, and Asp-307. Residue Asp-96 is part of the active site. An intrachain disulfide couples Cys-464 to Cys-512. A helical membrane pass occupies residues 617 to 639 (FTPVTVFIKFIVPFGIFLTLYFV). Arg-640 is a topological domain (cytoplasmic).

Belongs to the glycosyl hydrolase 32 family. Expressed in buds, stems, roots and leaves.

It localises to the membrane. It is found in the vacuole membrane. It carries out the reaction Hydrolysis of terminal non-reducing beta-D-fructofuranoside residues in beta-D-fructofuranosides.. Functionally, vacuolar invertase. The sequence is that of Acid beta-fructofuranosidase 2, vacuolar from Rosa hybrid cultivar.